A 485-amino-acid chain; its full sequence is Sulfate adenylyltransferase subunit 1 (485 aa).

The tr-type G domain occupies 17 to 232 (KDLLRLLTAG…LETVHIDNDH (216 aa)). Positions 26 to 33 (GSVDDGKS) are G1. 26–33 (GSVDDGKS) is a binding site for GTP. Positions 84–88 (GITID) are G2. The G3 stretch occupies residues 105 to 108 (DTPG). Residues 105–109 (DTPGH) and 160–163 (NKMD) each bind GTP. Residues 160–163 (NKMD) are G4. The segment at 197–199 (SAL) is G5.

Belongs to the TRAFAC class translation factor GTPase superfamily. Classic translation factor GTPase family. CysN/NodQ subfamily. In terms of assembly, heterodimer composed of CysD, the smaller subunit, and CysN.

The enzyme catalyses sulfate + ATP + H(+) = adenosine 5'-phosphosulfate + diphosphate. The protein operates within sulfur metabolism; hydrogen sulfide biosynthesis; sulfite from sulfate: step 1/3. Its function is as follows. With CysD forms the ATP sulfurylase (ATPS) that catalyzes the adenylation of sulfate producing adenosine 5'-phosphosulfate (APS) and diphosphate, the first enzymatic step in sulfur assimilation pathway. APS synthesis involves the formation of a high-energy phosphoric-sulfuric acid anhydride bond driven by GTP hydrolysis by CysN coupled to ATP hydrolysis by CysD. The chain is Sulfate adenylyltransferase subunit 1 from Bacteroides thetaiotaomicron (strain ATCC 29148 / DSM 2079 / JCM 5827 / CCUG 10774 / NCTC 10582 / VPI-5482 / E50).